The sequence spans 262 residues: Carbohydrate deacetylase (262 aa).

Histidine 129 serves as a coordination point for Mg(2+).

It belongs to the YdjC deacetylase family. As to quaternary structure, homodimer. Mg(2+) serves as cofactor.

Its function is as follows. Probably catalyzes the deacetylation of acetylated carbohydrates an important step in the degradation of oligosaccharides. This Enterococcus faecalis (strain ATCC 700802 / V583) protein is Carbohydrate deacetylase.